The following is an 82-amino-acid chain: RNA-binding protein Hfq (82 aa).

The Sm domain maps to 9 to 68; sequence DPYLNTLRKERVPVSIYLVNGIKLQGQIESFDQFVILLKNTVSQMVYKHAISTVVPSRPV.

Belongs to the Hfq family. Homohexamer.

Functionally, RNA chaperone that binds small regulatory RNA (sRNAs) and mRNAs to facilitate mRNA translational regulation in response to envelope stress, environmental stress and changes in metabolite concentrations. Also binds with high specificity to tRNAs. The chain is RNA-binding protein Hfq from Pseudomonas aeruginosa (strain LESB58).